The chain runs to 834 residues: Transcription intermediary factor 1-beta (834 aa).

Position 2 is an N-acetylalanine (Ala-2). A compositionally biased stretch (low complexity) spans 13–23 (AATAASAASGS). The tract at residues 13–56 (AATAASAASGSPGSGEGSAGGEKRPAASSAAAASAAASSPAGGG) is disordered. Phosphoserine occurs at positions 23, 26, and 30. Lys-35 is covalently cross-linked (Glycyl lysine isopeptide (Lys-Gly) (interchain with G-Cter in SUMO2)). Positions 38–52 (AASSAAAASAAASSP) are enriched in low complexity. Ser-51 bears the Phosphoserine mark. An RING-type zinc finger spans residues 66–122 (CGVCRERLRPERDPRLLPCLHSACSACLGPATPAAANNSGDGGSAGDGAMVDCPVCK). Residue Lys-128 forms a Glycyl lysine isopeptide (Lys-Gly) (interchain with G-Cter in SUMO2) linkage. Ser-139 is subject to Phosphoserine. The segment at 149 to 196 (DANQCCTSCEDNAPATSYCVECSEPLCETCVEAHQRVKYTKDHTVRST) adopts a B box-type 1 zinc-finger fold. Residues Cys-154, Cys-157, Cys-178, and His-182 each coordinate Zn(2+). A Glycyl lysine isopeptide (Lys-Gly) (interchain with G-Cter in SUMO2) cross-link involves residue Lys-200. The segment at 205–246 (ERTVYCNVHKHEPLVLFCESCDTLTCRDCQLNAHKDHQYQFL) adopts a B box-type 2 zinc-finger fold. Zn(2+)-binding residues include Cys-210, His-213, Cys-233, and His-238. Residues 247-377 (EDAVRNQRKL…LIYFQLHRAL (131 aa)) are leucine zipper alpha helical coiled-coil region. Residues 248–377 (DAVRNQRKLL…LIYFQLHRAL (130 aa)) form an interaction with MAGEC2 region. Residues Lys-255 and Lys-262 each participate in a glycyl lysine isopeptide (Lys-Gly) (interchain with G-Cter in SUMO2) cross-link. At Lys-267 the chain carries N6-acetyllysine. Lys-273 participates in a covalent cross-link: Glycyl lysine isopeptide (Lys-Gly) (interchain with G-Cter in SUMO2). At Lys-305 the chain carries N6-acetyllysine; alternate. Lys-305 is covalently cross-linked (Glycyl lysine isopeptide (Lys-Gly) (interchain with G-Cter in SUMO2); alternate). Residue Lys-320 forms a Glycyl lysine isopeptide (Lys-Gly) (interchain with G-Cter in SUMO2) linkage. At Lys-341 the chain carries N6-acetyllysine. Lys-367 is covalently cross-linked (Glycyl lysine isopeptide (Lys-Gly) (interchain with G-Cter in SUMO2)). The segment at 367–371 (KLIYF) is involved in binding PPP1CA. Lys-378 bears the N6-acetyllysine; alternate mark. Residue Lys-378 forms a Glycyl lysine isopeptide (Lys-Gly) (interchain with G-Cter in SUMO2); alternate linkage. A Glycyl lysine isopeptide (Lys-Gly) (interchain with G-Cter in SUMO1); alternate cross-link involves residue Lys-378. Residue Lys-408 forms a Glycyl lysine isopeptide (Lys-Gly) (interchain with G-Cter in SUMO2) linkage. Residues 412-480 (ERPGTNSTGP…SRSGEGEVSG (69 aa)) are disordered. Ser-418 carries the phosphoserine modification. Residue Lys-435 forms a Glycyl lysine isopeptide (Lys-Gly) (interchain with G-Cter in SUMO2) linkage. Over residues 435 to 444 (KQGSGSSQPM) the composition is skewed to polar residues. A phosphoserine mark is found at Ser-438, Ser-440, and Ser-454. Lys-469 is covalently cross-linked (Glycyl lysine isopeptide (Lys-Gly) (interchain with G-Cter in SUMO2); alternate). Lys-469 is covalently cross-linked (Glycyl lysine isopeptide (Lys-Gly) (interchain with G-Cter in SUMO1); alternate). A Citrulline modification is found at Arg-470. Position 471 is a phosphoserine (Ser-471). At Arg-472 the chain carries Citrulline. Phosphoserine is present on residues Ser-473, Ser-479, and Ser-489. The segment at 476–513 (GEVSGLLRKVPRVSLERLDLDLTSDSQPPVFKVFPGST) is HP1 box. A PxVxL motif motif is present at residues 481–494 (LLRKVPRVSLERLD). Thr-498 bears the Phosphothreonine mark. Ser-501 is subject to Phosphoserine. Lys-507 is covalently cross-linked (Glycyl lysine isopeptide (Lys-Gly) (interchain with G-Cter in SUMO2)). A Glycyl lysine isopeptide (Lys-Gly) (interchain with G-Cter in SUMO2); alternate cross-link involves residue Lys-554. Lys-554 is covalently cross-linked (Glycyl lysine isopeptide (Lys-Gly) (interchain with G-Cter in SUMO); alternate). A Glycyl lysine isopeptide (Lys-Gly) (interchain with G-Cter in SUMO2) cross-link involves residue Lys-575. Positions 581-602 (LTEGPGAEGPRLASPSGSTSSG) are disordered. Ser-594 bears the Phosphoserine mark. A PHD-type zinc finger spans residues 625–672 (ATICRVCQKPGDLVMCNQCEFCFHLDCHLPALQDVPGEEWSCSLCHVL). Residue Lys-676 forms a Glycyl lysine isopeptide (Lys-Gly) (interchain with G-Cter in SUMO) linkage. Phosphoserine is present on residues Ser-683, Ser-689, and Ser-697. The region spanning 695–799 (KLSPANQRKC…RFFETRMNDA (105 aa)) is the Bromo domain. Lys-750 participates in a covalent cross-link: Glycyl lysine isopeptide (Lys-Gly) (interchain with G-Cter in SUMO2); alternate. Lys-750 is covalently cross-linked (Glycyl lysine isopeptide (Lys-Gly) (interchain with G-Cter in SUMO1); alternate). Lys-750 is covalently cross-linked (Glycyl lysine isopeptide (Lys-Gly) (interchain with G-Cter in SUMO); alternate). Ser-752 carries the post-translational modification Phosphoserine. The residue at position 755 (Tyr-755) is a Phosphotyrosine. A Phosphoserine modification is found at Ser-757. An N6-acetyllysine; alternate mark is found at Lys-770, Lys-774, and Lys-779. Residues Lys-770, Lys-774, and Lys-779 each participate in a glycyl lysine isopeptide (Lys-Gly) (interchain with G-Cter in SUMO2); alternate cross-link. Lys-779 participates in a covalent cross-link: Glycyl lysine isopeptide (Lys-Gly) (interchain with G-Cter in SUMO1); alternate. Phosphoserine is present on Ser-784. A Glycyl lysine isopeptide (Lys-Gly) (interchain with G-Cter in SUMO2) cross-link involves residue Lys-804. Phosphoserine; by ATM and ATR and dsDNA kinase is present on Ser-824.

The protein belongs to the TRIM/RBCC family. In terms of assembly, oligomer; the RBCC domain homotrimerizes and interacts with one molecule of KRAB to form the KRAB-KAP1 corepressor complex. Interacts with SETX. Binding to a KRAB domain is an absolute requirement for silencing gene expression. Interacts with a number of KRAB-ZFP proteins including ZNF10, ZFP53, ZFP68, ZNF382 and ZNF256. Interacts with NCOR1, NR3C1 and CHD3. Interacts with CEBPB (via the RING-type and PHD-type zinc fingers). Interacts with CBX5 (via the PxVxL motif); the interaction occurs in interphase nuclei and competes for binding POGZ. Interacts with POGZ; the interaction competes for interaction with CBX5. Interacts with SETDB1; the interaction is enhanced by KAP1 sumoylation, stimulates SETDB1 histone methyltransferase activity and gene silencing. Interacts (via the PHD-type zinc finger) with UBE2I; the interaction is required for sumoylation and repressor activity. Component of the TRIM28/KAP1-ERBB4-MDM2 complex involved in connecting growth factor and DNA damage responses. Interacts directly with ERBB4; the interaction represses ERBB4-mediated transcription activity. Interacts with MDM2; the interaction contributes to p53/TP53 inactivation. Component of the TRIM28/KAP1-MDM2-p53/TP53; involved in regulating p53/TP53 stabilization and activity. Interacts (via the leucine zipper alpha helical coiled-coil) with E2F1 (central region); the interaction inhibits E2F1 acetylation and transcriptional activity. Interacts with PPP1CA; the interaction dephosphorylates TRIM28 at Ser-824 and forms a complex at the p21 promoter site. Interacts with PPP1CB; the interaction is weak but is increased on dephosphorylation at Ser-824. Interacts with CEBPB and NR3C1. Interacts with CBX5 (via the PxVxL motif); the interaction occurs in interphase nuclei and competes for binding POGZ. Component of a ternary complex that includes TRIM28, a HP1 protein (CBX1, CBX3 OR CBX5), a KRAB domain-containing protein, and DNA. Interacts with SMARCAD1. Interacts with, and sumoylates IRF7. Interacts with MAGEC2. Part of a complex composed of TRIM28, HDAC1, HDAC2 and EHMT2. Interacts (via the RBCC domain) with KOX1 (via the KRAB domain), ZNF268 (via the KRAB domain) and ZNF300 (via the KRAB domain); the interactions increase KOX1, ZNF268 and ZNF300 nuclear localization activities. Interacts with AICDA. The large PER complex involved in the histone methylation is composed of at least PER2, CBX3, TRIM28, SUV39H1 and/or SUV39H2; CBX3 mediates the formation of the complex. Interacts with NR4A3; the interactions potentiates NR4A3 activity on NurRE promoter. Interacts (unphosphorylated or phosphorylated form) with ZBTB1 (via BTB domain). Probably part of a corepressor complex containing ZNF304, TRIM28, SETDB1 and DNMT1. Interacts with ATRX. Forms a complex with ATRX, SETDB1 and ZNF274. Interacts with ZFP568; the interaction mediates ZFP568 transcriptional repression activity. Interacts with RRP1B. Interacts with CRY1. Interacts with ZNF263; recruited to the SIX3 promoter along with other proteins involved in chromatin modification and transcriptional corepression where it contributes to transcriptional repression. Interacts with CYREN (via XLF motif). Interacts with TRIM17; this interaction prevents TRIM28 activity. Interacts with ZNF746. Interacts with PHF13. Interacts with ZNF354C. Interacts with ZNF432; the interaction is independent of PARP1. In terms of processing, ATM-induced phosphorylation on Ser-824 represses sumoylation leading to the de-repression of expression of a subset of genes involved in cell cycle control and apoptosis in response to genotoxic stress. Dephosphorylation by the phosphatases, PPP1CA and PP1CB forms, allows sumoylation and expression of TRIM28 target genes. Sumoylation/desumoylation events regulate TRIM28-mediated transcriptional repression. Sumoylation is required for interaction with CHD3 and SETDB1 and the corepressor activity. Represses and is repressed by Ser-824 phosphorylation. Enhances the TRIM28 corepressor activity, inhibiting transcriptional activity of a number of genes including GADD45A and CDKN1A/p21. Lys-554, Lys-779 and Lys-804 are the major sites of sumoylation. In response to Dox-induced DNA damage, enhanced phosphorylation on Ser-824 prevents sumoylation and allows de-repression of CDKN1A/p21. Post-translationally, auto-ubiquitinated; enhanced by MAGEA2 and MAGEC2. In terms of processing, citrullinated by PADI4. ADP-ribosylated by SIRT6, promoting TRIM28/KAP1 interaction with CBX5, thereby contributing to the packaging of LINE-1 retrotransposon elements into transcriptionally repressive heterochromatin.

The protein resides in the nucleus. The catalysed reaction is S-ubiquitinyl-[E2 ubiquitin-conjugating enzyme]-L-cysteine + [acceptor protein]-L-lysine = [E2 ubiquitin-conjugating enzyme]-L-cysteine + N(6)-ubiquitinyl-[acceptor protein]-L-lysine.. The protein operates within protein modification; protein sumoylation. Functionally, nuclear corepressor for KRAB domain-containing zinc finger proteins (KRAB-ZFPs). Mediates gene silencing by recruiting CHD3, a subunit of the nucleosome remodeling and deacetylation (NuRD) complex, and SETDB1 (which specifically methylates histone H3 at 'Lys-9' (H3K9me)) to the promoter regions of KRAB target genes. Enhances transcriptional repression by coordinating the increase in H3K9me, the decrease in histone H3 'Lys-9 and 'Lys-14' acetylation (H3K9ac and H3K14ac, respectively) and the disposition of HP1 proteins to silence gene expression. Recruitment of SETDB1 induces heterochromatinization. May play a role as a coactivator for CEBPB and NR3C1 in the transcriptional activation of ORM1. Also a corepressor for ERBB4. Inhibits E2F1 activity by stimulating E2F1-HDAC1 complex formation and inhibiting E2F1 acetylation. May serve as a partial backup to prevent E2F1-mediated apoptosis in the absence of RB1. Important regulator of CDKN1A/p21(CIP1). Has E3 SUMO-protein ligase activity toward itself via its PHD-type zinc finger. Specifically sumoylates IRF7, thereby inhibiting its transactivation activity. Ubiquitinates p53/TP53 leading to its proteasomal degradation; the function is enhanced by MAGEC2 and MAGEA2, and possibly MAGEA3 and MAGEA6. Mediates the nuclear localization of KOX1, ZNF268 and ZNF300 transcription factors. Probably forms a corepressor complex required for activated KRAS-mediated promoter hypermethylation and transcriptional silencing of tumor suppressor genes (TSGs) or other tumor-related genes in colorectal cancer (CRC) cells. Required to maintain a transcriptionally repressive state of genes in undifferentiated embryonic stem cells (ESCs). In ESCs, in collaboration with SETDB1, is also required for H3K9me3 and silencing of endogenous and introduced retroviruses in a DNA-methylation independent-pathway. Associates at promoter regions of tumor suppressor genes (TSGs) leading to their gene silencing. The SETDB1-TRIM28-ZNF274 complex may play a role in recruiting ATRX to the 3'-exons of zinc-finger coding genes with atypical chromatin signatures to establish or maintain/protect H3K9me3 at these transcriptionally active regions. Acts as a corepressor for ZFP568. The sequence is that of Transcription intermediary factor 1-beta from Mus musculus (Mouse).